Reading from the N-terminus, the 358-residue chain is Carbamoyl phosphate synthase small chain (358 aa).

Residues 1–168 are CPSase; that stretch reads MKRLLLLEDG…TKLAYASPGV (168 aa). Serine 45, glycine 219, and glycine 221 together coordinate L-glutamine. Residues 171 to 357 form the Glutamine amidotransferase type-1 domain; that stretch reads NIVLVDFGLK…INMIDDFQQK (187 aa). The Nucleophile role is filled by cysteine 246. Residues methionine 247, glutamine 250, asparagine 288, glycine 290, and tyrosine 291 each coordinate L-glutamine. Residues histidine 330 and aspartate 332 contribute to the active site.

The protein belongs to the CarA family. As to quaternary structure, composed of two chains; the small (or glutamine) chain promotes the hydrolysis of glutamine to ammonia, which is used by the large (or ammonia) chain to synthesize carbamoyl phosphate. Tetramer of heterodimers (alpha,beta)4.

It catalyses the reaction hydrogencarbonate + L-glutamine + 2 ATP + H2O = carbamoyl phosphate + L-glutamate + 2 ADP + phosphate + 2 H(+). The catalysed reaction is L-glutamine + H2O = L-glutamate + NH4(+). The protein operates within amino-acid biosynthesis; L-arginine biosynthesis; carbamoyl phosphate from bicarbonate: step 1/1. It participates in pyrimidine metabolism; UMP biosynthesis via de novo pathway; (S)-dihydroorotate from bicarbonate: step 1/3. Its function is as follows. Small subunit of the glutamine-dependent carbamoyl phosphate synthetase (CPSase). CPSase catalyzes the formation of carbamoyl phosphate from the ammonia moiety of glutamine, carbonate, and phosphate donated by ATP, constituting the first step of 2 biosynthetic pathways, one leading to arginine and/or urea and the other to pyrimidine nucleotides. The small subunit (glutamine amidotransferase) binds and cleaves glutamine to supply the large subunit with the substrate ammonia. This chain is Carbamoyl phosphate synthase small chain, found in Streptococcus agalactiae serotype III (strain NEM316).